Reading from the N-terminus, the 363-residue chain is tRNA N6-adenosine threonylcarbamoyltransferase (363 aa).

Fe cation is bound by residues His-121 and His-125. Substrate contacts are provided by residues 143 to 147 (LASGG), Asp-176, Gly-189, and Asn-287. Asp-315 provides a ligand contact to Fe cation.

It belongs to the KAE1 / TsaD family. The cofactor is Fe(2+).

Its subcellular location is the cytoplasm. The enzyme catalyses L-threonylcarbamoyladenylate + adenosine(37) in tRNA = N(6)-L-threonylcarbamoyladenosine(37) in tRNA + AMP + H(+). Its function is as follows. Required for the formation of a threonylcarbamoyl group on adenosine at position 37 (t(6)A37) in tRNAs that read codons beginning with adenine. Is involved in the transfer of the threonylcarbamoyl moiety of threonylcarbamoyl-AMP (TC-AMP) to the N6 group of A37, together with TsaE and TsaB. TsaD likely plays a direct catalytic role in this reaction. The sequence is that of tRNA N6-adenosine threonylcarbamoyltransferase from Rhodopseudomonas palustris (strain BisA53).